A 333-amino-acid chain; its full sequence is PDZ domain-containing protein GIPC1 (333 aa).

The segment covering 1 to 11 (MPLGLGRRKKA) has biased composition (basic residues). The segment at 1–54 (MPLGLGRRKKAPPLVENEEAEPGRGGLGVGEPGPLGGGGSGGPQMGLPPPPPAL) is disordered. Residues 23 to 44 (GRGGLGVGEPGPLGGGGSGGPQ) show a composition bias toward gly residues. Serine 68 is subject to Phosphoserine. Residues 133–213 (EVEVFKSEDA…GRTFTLKLTE (81 aa)) enclose the PDZ domain. Serine 222, serine 225, and serine 232 each carry phosphoserine. The interval 223–244 (QRSAGGRPGSGPQLGTGRGTLR) is disordered. A compositionally biased stretch (gly residues) spans 228–240 (GRPGSGPQLGTGR). Phosphothreonine is present on threonine 242. Serine 247 bears the Phosphoserine mark.

The protein belongs to the GIPC family. In terms of assembly, interacts with GLUT1 (C-terminus), ACTN1, KIF1B, MYO6, PLEKHG5, SDC4/syndecan-4 and SEMA4C/semaphorin-4C. Interacts with RGS19 C-terminus. Interacts with HTLV-I Tax through the PDZ domain. Widely expressed. Expressed in skeletal muscle (at protein level).

The protein localises to the cytoplasm. The protein resides in the membrane. In terms of biological role, may be involved in G protein-linked signaling. This chain is PDZ domain-containing protein GIPC1 (GIPC1), found in Homo sapiens (Human).